A 248-amino-acid polypeptide reads, in one-letter code: Putative TrmH family tRNA/rRNA methyltransferase (248 aa).

Positions 196, 216, and 225 each coordinate S-adenosyl-L-methionine.

This sequence belongs to the class IV-like SAM-binding methyltransferase superfamily. RNA methyltransferase TrmH family.

This chain is Putative TrmH family tRNA/rRNA methyltransferase, found in Staphylococcus aureus (strain COL).